A 233-amino-acid chain; its full sequence is Uridylate kinase (233 aa).

ATP-binding positions include 8 to 11 (KLSG), Gly51, and Arg55. Residues Asp68 and 129–136 (TSNPFFTT) contribute to the UMP site. Thr156, Tyr162, and Asp165 together coordinate ATP.

The protein belongs to the UMP kinase family. Homohexamer.

The protein localises to the cytoplasm. The enzyme catalyses UMP + ATP = UDP + ADP. Its pathway is pyrimidine metabolism; CTP biosynthesis via de novo pathway; UDP from UMP (UMPK route): step 1/1. Inhibited by UTP. Catalyzes the reversible phosphorylation of UMP to UDP. This Thermosipho melanesiensis (strain DSM 12029 / CIP 104789 / BI429) protein is Uridylate kinase.